The following is a 217-amino-acid chain: NAD(P)H-hydrate epimerase (217 aa).

The YjeF N-terminal domain maps to 1 to 217 (MRAIENAAMA…VAVADIGLSS (217 aa)). Position 48 to 52 (48 to 52 (NNGGD)) interacts with (6S)-NADPHX. Positions 49 and 127 each coordinate K(+). (6S)-NADPHX is bound by residues 131 to 137 (GIGQTRP) and aspartate 165. A K(+)-binding site is contributed by threonine 168.

This sequence belongs to the NnrE/AIBP family. K(+) is required as a cofactor.

The catalysed reaction is (6R)-NADHX = (6S)-NADHX. The enzyme catalyses (6R)-NADPHX = (6S)-NADPHX. In terms of biological role, catalyzes the epimerization of the S- and R-forms of NAD(P)HX, a damaged form of NAD(P)H that is a result of enzymatic or heat-dependent hydration. This is a prerequisite for the S-specific NAD(P)H-hydrate dehydratase to allow the repair of both epimers of NAD(P)HX. The polypeptide is NAD(P)H-hydrate epimerase (Cereibacter sphaeroides (strain KD131 / KCTC 12085) (Rhodobacter sphaeroides)).